Consider the following 204-residue polypeptide: Putative peroxiredoxin ycf42 (204 aa).

One can recognise a Thioredoxin domain in the interval 5 to 163 (PKIGKTPPNF…LLRILESIQY (159 aa)).

Belongs to the peroxiredoxin family. AhpC/Prx1 subfamily.

Its subcellular location is the plastid. The protein localises to the chloroplast. The catalysed reaction is a hydroperoxide + [protein]-dithiol = [protein]-disulfide + an alcohol + H2O. This Trieres chinensis (Marine centric diatom) protein is Putative peroxiredoxin ycf42 (ycf42).